Reading from the N-terminus, the 556-residue chain is Sensory neuron membrane protein 2 (556 aa).

Residues 1–6 lie on the Cytoplasmic side of the membrane; that stretch reads MIHWSL. Residues 7-27 form a helical membrane-spanning segment; the sequence is IVSALGVCVAVLGGYCGWILF. Topologically, residues 28 to 522 are extracellular; that stretch reads PNMVHKKVEQ…KLINTLKTLN (495 aa). N-linked (GlcNAc...) asparagine glycosylation is found at asparagine 66, asparagine 274, asparagine 310, and asparagine 324. 2 cysteine pairs are disulfide-bonded: cysteine 320–cysteine 388 and cysteine 349–cysteine 415. A helical transmembrane segment spans residues 523–543; sequence IVHWATLCGGIGVAVACLIYY. Residues 544 to 556 lie on the Cytoplasmic side of the membrane; it reads IYQRGRVVEPPVK.

Belongs to the CD36 family. Detected in the head and to a lesser extent in legs and wings.

The protein localises to the cell membrane. Its function is as follows. Plays an olfactory role that is not restricted to pheromone sensitivity. The protein is Sensory neuron membrane protein 2 of Drosophila melanogaster (Fruit fly).